A 289-amino-acid chain; its full sequence is HTH-type transcriptional regulator SoxR (289 aa).

In terms of domain architecture, HTH lysR-type spans 1-58; sequence MEIKDLQIFQKVVEYGSVSKAAKSLNYVQSYVTVRIQKLEEELQTELFHRSSRGMVLN. A DNA-binding region (H-T-H motif) is located at residues 18-37; it reads VSKAAKSLNYVQSYVTVRIQ.

Belongs to the LysR transcriptional regulatory family.

Functionally, transcriptional repressor of soxA gene expression. The protein is HTH-type transcriptional regulator SoxR (soxR) of Arthrobacter sp. (strain TE1826).